The primary structure comprises 101 residues: Replication restart protein PriB (101 aa).

In terms of domain architecture, SSB spans 1–101; sequence MTTNSLVLSG…IHAENVELKT (101 aa).

Belongs to the PriB family. As to quaternary structure, homodimer. Interacts with PriA and DnaT. Component of the replication restart primosome. Primosome assembly occurs via a 'hand-off' mechanism. PriA binds to replication forks, subsequently PriB then DnaT bind; DnaT then displaces ssDNA to generate the helicase loading substrate.

Its function is as follows. Involved in the restart of stalled replication forks, which reloads the replicative helicase on sites other than the origin of replication; the PriA-PriB pathway is the major replication restart pathway. During primosome assembly it facilitates complex formation between PriA and DnaT on DNA; stabilizes PriA on DNA. Stimulates the DNA unwinding activity of PriA helicase. The polypeptide is Replication restart protein PriB (Shewanella putrefaciens (strain CN-32 / ATCC BAA-453)).